Reading from the N-terminus, the 370-residue chain is UDP-N-acetylglucosamine--N-acetylmuramyl-(pentapeptide) pyrophosphoryl-undecaprenol N-acetylglucosamine transferase (370 aa).

Residues 10–12 (TGG), asparagine 124, serine 196, isoleucine 253, and glutamine 298 contribute to the UDP-N-acetyl-alpha-D-glucosamine site.

This sequence belongs to the glycosyltransferase 28 family. MurG subfamily.

Its subcellular location is the cell membrane. The enzyme catalyses Mur2Ac(oyl-L-Ala-gamma-D-Glu-L-Lys-D-Ala-D-Ala)-di-trans,octa-cis-undecaprenyl diphosphate + UDP-N-acetyl-alpha-D-glucosamine = beta-D-GlcNAc-(1-&gt;4)-Mur2Ac(oyl-L-Ala-gamma-D-Glu-L-Lys-D-Ala-D-Ala)-di-trans,octa-cis-undecaprenyl diphosphate + UDP + H(+). It participates in cell wall biogenesis; peptidoglycan biosynthesis. Cell wall formation. Catalyzes the transfer of a GlcNAc subunit on undecaprenyl-pyrophosphoryl-MurNAc-pentapeptide (lipid intermediate I) to form undecaprenyl-pyrophosphoryl-MurNAc-(pentapeptide)GlcNAc (lipid intermediate II). The polypeptide is UDP-N-acetylglucosamine--N-acetylmuramyl-(pentapeptide) pyrophosphoryl-undecaprenol N-acetylglucosamine transferase (Limosilactobacillus reuteri subsp. reuteri (strain JCM 1112) (Lactobacillus reuteri)).